Reading from the N-terminus, the 1270-residue chain is Breakpoint cluster region protein (1270 aa).

The residue at position 1 (Met-1) is an N-acetylmethionine. Positions 1-428 are kinase; the sequence is MVDSVGFAEA…DGDSTFQGEA (428 aa). Residues 28 to 55 adopt a coiled-coil conformation; sequence VGDIEQELERCKASIRRLEQEVNQERFR. Residues 67–173 are disordered; the sequence is KKSYDRQRWG…GPAQPGSADA (107 aa). The segment covering 121–139 has biased composition (low complexity); sequence GSPSKGRSASARRPAAAAS. 2 positions are modified to phosphoserine: Ser-122 and Ser-139. Phosphotyrosine; by HCK is present on Tyr-178. The tract at residues 198 to 387 is binding to ABL SH2-domain; the sequence is SDRISSLGSQ…QSFDSSSPPT (190 aa). Disordered stretches follow at residues 201-249, 295-396, and 412-481; these read ISSL…DYED, KSPL…RHRQ, and TGQI…SGAL. Residues Ser-203, Ser-216, and Ser-237 each carry the phosphoserine modification. Tyr-247 is modified (phosphotyrosine; by FES). 2 stretches are compositionally biased toward low complexity: residues 348-358 and 371-384; these read SSGQSSRVSPS and SPSQNSQQSFDSSS. A phosphoserine mark is found at Ser-358, Ser-379, and Ser-384. Thr-387 is subject to Phosphothreonine. 2 positions are modified to phosphoserine: Ser-461 and Ser-465. At Arg-473 the chain carries Omega-N-methylarginine. A phosphoserine mark is found at Ser-475 and Ser-487. The DH domain maps to 497–690; sequence MRKWVLSGIL…QNFLSSINEE (194 aa). Residue Tyr-553 is modified to Phosphotyrosine. Thr-640 is subject to Phosphothreonine. At Tyr-643 the chain carries Phosphotyrosine. Thr-692 is modified (phosphothreonine). A PH domain is found at 707–865; the sequence is QLLKDSFMVE…WRESIREQQK (159 aa). The region spanning 892–1019 is the C2 domain; the sequence is HHIPLTINKE…QDRDWQRTVI (128 aa). The region spanning 1053-1247 is the Rho-GAP domain; the sequence is VKIAVVTKRE…VMSQVQVLLY (195 aa). The residue at position 1263 (Ser-1263) is a Phosphoserine.

As to quaternary structure, homotetramer. Interacts with PDZK1. Interacts with HCK, FES/FPS, ABL1, PIK3R1 and GRB2. May interact with CCPG1. Interacts with SH2D5. Interacts with DLG4. Post-translationally, autophosphorylated. Phosphorylated by FES/FPS on tyrosine residues, leading to down-regulation of the BCR kinase activity. Phosphorylation at Tyr-178 by HCK is important for interaction with GRB2. As to expression, expressed in brain. In hippocampal subregions, most abundant in the CA1 region and expressed at successively lower levels in the dentate gyrus and the CA3 region.

It localises to the postsynaptic density. The protein localises to the cell projection. It is found in the dendritic spine. The protein resides in the axon. Its subcellular location is the synapse. It carries out the reaction L-seryl-[protein] + ATP = O-phospho-L-seryl-[protein] + ADP + H(+). It catalyses the reaction L-threonyl-[protein] + ATP = O-phospho-L-threonyl-[protein] + ADP + H(+). Its function is as follows. Protein with a unique structure having two opposing regulatory activities toward small GTP-binding proteins. The C-terminus is a GTPase-activating protein (GAP) domain which stimulates GTP hydrolysis by RAC1, RAC2 and CDC42. Accelerates the intrinsic rate of GTP hydrolysis of RAC1 or CDC42, leading to down-regulation of the active GTP-bound form. The central Dbl homology (DH) domain functions as guanine nucleotide exchange factor (GEF) that modulates the GTPases CDC42, RHOA and RAC1. Promotes the conversion of CDC42, RHOA and RAC1 from the GDP-bound to the GTP-bound form. The amino terminus contains an intrinsic kinase activity. Functions as an important negative regulator of neuronal RAC1 activity. Regulates macrophage functions such as CSF1-directed motility and phagocytosis through the modulation of RAC1 activity. Plays a major role as a RHOA GEF in keratinocytes being involved in focal adhesion formation and keratinocyte differentiation. The sequence is that of Breakpoint cluster region protein from Mus musculus (Mouse).